Reading from the N-terminus, the 559-residue chain is Excitatory amino acid transporter 5 (559 aa).

Over 1–16 (MVLDAVLARGRTVCKH) the chain is Cytoplasmic. The next 3 helical transmembrane spans lie at 17–37 (NGLLILSVLSVIVGCLLGFFL), 60–80 (MLKMLILPLVVSSLMSGLASL), and 94–114 (AYYLWTTFLAVVVGIIMVSII). The Extracellular portion of the chain corresponds to 115-215 (HPGGAAQKET…EIVYKSEPGT (101 aa)). A glycan (N-linked (GlcNAc...) asparagine) is linked at N190. A helical membrane pass occupies residues 216 to 236 (SDGMNVLGIVIFSATMGIMLG). N253 carries an N-linked (GlcNAc...) asparagine glycan. The next 6 helical transmembrane spans lie at 259-279 (IVAVAGWYFPFGIVFLIAGKI), 298-318 (TVVCGLVVHGLLILPLLYFLI), 329-349 (GVLQALLIALATSSSSATLPI), 371-391 (VGATINMDGTALYEAVAAIFI), 413-433 (AASIGAAGIPQAGLVTMVIVL), and 456-476 (FRTMINVLGDALAAGIMAHIC).

The protein belongs to the dicarboxylate/amino acid:cation symporter (DAACS) (TC 2.A.23) family. SLC1A7 subfamily. In terms of assembly, interacts with the PDZ domains of DLG4. As to expression, expressed in retina, located in both cone and rod photoreceptor terminals and in axon terminals of rod bipolar cells.

The protein resides in the photoreceptor inner segment membrane. It is found in the synaptic cell membrane. The catalysed reaction is K(+)(in) + L-glutamate(out) + 3 Na(+)(out) + H(+)(out) = K(+)(out) + L-glutamate(in) + 3 Na(+)(in) + H(+)(in). It catalyses the reaction K(+)(in) + L-aspartate(out) + 3 Na(+)(out) + H(+)(out) = K(+)(out) + L-aspartate(in) + 3 Na(+)(in) + H(+)(in). The enzyme catalyses D-aspartate(out) + K(+)(in) + 3 Na(+)(out) + H(+)(out) = D-aspartate(in) + K(+)(out) + 3 Na(+)(in) + H(+)(in). Its function is as follows. Sodium-dependent, high-affinity amino acid transporter that mediates the uptake of L-glutamate and also L-aspartate and D-aspartate. Functions as a symporter that transports one amino acid molecule together with two or three Na(+) ions and one proton, in parallel with the counter-transport of one K(+) ion. Acts primarily as an inhibitory glutamate-gated chloride channel being a major inhibitory presynaptic receptor at mammalian rod bipolar cell axon terminals. Glutamate binding gates a large Cl(-) conductance that mediates inhibition, affecting visual processing in the retina. The sequence is that of Excitatory amino acid transporter 5 from Mus musculus (Mouse).